The primary structure comprises 437 residues: Sperm-associated antigen 4 protein (437 aa).

The segment covering 1 to 12 has biased composition (low complexity); that stretch reads MRRSSRPGSASS. Positions 1-88 are disordered; that stretch reads MRRSSRPGSA…KPAPRSHNWQ (88 aa). Polar residues-rich tracts occupy residues 19–31 and 72–88; these read NFFS…SITS and WAGS…HNWQ. 2 helical membrane passes run 135–155 and 166–186; these read FLSL…DVLV and FLFT…LGLL. The stretch at 197 to 244 forms a coiled coil; that stretch reads KEMLTLSEYHERVRSQGQQLQQLQAELDKLHKEVSTVRAANSERVAKL. An SUN domain is found at 265–425; sequence GASIDLQKTS…YRVRAHGVRT (161 aa).

Homodimer. Interacts with ODF1. May associate with microtubules. Interacts with SUN3 and SYNE1; suggesting the formation of a spermatogenesis-specific LINC complex; a SUN domain-based heterotrimer with SUN3 may associate with SYNE1. Interacts with SEPT12 and LMNB1; during spermatogenesis. In terms of tissue distribution, predominantly epressed in testis. Expressed in ejaculated spermatozoa (at protein level).

It is found in the membrane. Its subcellular location is the cytoplasm. It localises to the cytoskeleton. The protein resides in the flagellum axoneme. The protein localises to the nucleus envelope. It is found in the nucleus inner membrane. Functionally, involved in spermatogenesis. Required for sperm head formation but not required to establish and maintain general polarity of the sperm head. Required for anchoring and organization of the manchette. Required for targeting of SUN3 and probably SYNE1 through a probable SUN1:SYNE3 LINC complex to the nuclear envelope and involved in accurate posterior sperm head localization of the complex. May anchor SUN3 the nuclear envelope. Involved in maintenance of the nuclear envelope integrity. May assist the organization and assembly of outer dense fibers (ODFs), a specific structure of the sperm tail. This Homo sapiens (Human) protein is Sperm-associated antigen 4 protein (SPAG4).